A 239-amino-acid chain; its full sequence is Small ribosomal subunit protein uS3 (239 aa).

The region spanning 40-108 (RGLLEKELYS…VALNVQEVQN (69 aa)) is the KH type-2 domain. Positions 212–239 (KPKARPELPKAEERPRRRRPAVRVKKEE) are disordered. Basic and acidic residues predominate over residues 215 to 226 (ARPELPKAEERP). Residues 227–239 (RRRRPAVRVKKEE) are compositionally biased toward basic residues.

The protein belongs to the universal ribosomal protein uS3 family. In terms of assembly, part of the 30S ribosomal subunit. Forms a tight complex with proteins S10 and S14.

In terms of biological role, binds the lower part of the 30S subunit head. Binds mRNA in the 70S ribosome, positioning it for translation. This Thermus thermophilus (strain ATCC BAA-163 / DSM 7039 / HB27) protein is Small ribosomal subunit protein uS3 (rpsC).